We begin with the raw amino-acid sequence, 538 residues long: Dolichol kinase (538 aa).

Topologically, residues 1–18 are lumenal; it reads MTRECAPPTPGSGAPLSG. A helical transmembrane segment spans residues 19–39; it reads SVLAEAAVVFVVVLSIHAAVW. Residues 40–74 lie on the Cytoplasmic side of the membrane; sequence DRYSWCAVALAVQAFYVQYKWDRLLQQGSAVFQFR. A helical transmembrane segment spans residues 75 to 95; it reads MSANSGLLPASVVMPLLGLVM. Over 96–111 the chain is Lumenal; sequence KERCQAAGNPYFERFG. A helical membrane pass occupies residues 112–132; the sequence is IVVAATGMAVALFSSVLALGI. Topologically, residues 133–134 are cytoplasmic; it reads TR. The helical transmembrane segment at 135 to 155 threads the bilayer; sequence PVPTNTCVISGLAGGVIIYIM. Residues 156-163 lie on the Lumenal side of the membrane; sequence KHSLSVGE. The chain crosses the membrane as a helical span at residues 164–184; that stretch reads VIEVLEALLIFVYLNMILLYL. Residues 185 to 188 are Cytoplasmic-facing; sequence LPRC. A helical transmembrane segment spans residues 189 to 209; that stretch reads FTPGEALLVLGGISFMLNQLI. The Lumenal segment spans residues 210 to 224; the sequence is KRSLTVVESQGDPLD. Residues 225-245 traverse the membrane as a helical segment; sequence FFLLVVVVGMVLMGIFFSTLF. At 246-254 the chain is on the cytoplasmic side; the sequence is VFMDSGTWA. Residues 255–275 traverse the membrane as a helical segment; that stretch reads SSIFFHLMTCVLGLGVVLPWL. The Lumenal portion of the chain corresponds to 276–297; sequence HRLIRRNPLLWLFQFLFQTETR. Residues 298–318 traverse the membrane as a helical segment; sequence VYLLAYWCLLATVACLVVLYQ. Residues 319–337 are Cytoplasmic-facing; it reads NAKRSSSESKKHQAPTITR. The helical transmembrane segment at 338 to 354 threads the bilayer; it reads KYFHFIVVATYIPGIIL. The Lumenal portion of the chain corresponds to 355 to 359; that stretch reads DRPLL. Residues 360–380 traverse the membrane as a helical segment; the sequence is YVAATVCLAVFIFLEYVRYFR. Residues 381-401 are Cytoplasmic-facing; sequence IKPLGHTLRSLLSLFLDERDS. The chain crosses the membrane as a helical span at residues 402–422; the sequence is GPLILTHIYLLLGMSLPIWLV. Over 423–436 the chain is Lumenal; sequence PRPCTQKGSLGGAR. A helical membrane pass occupies residues 437–457; it reads ALVPYAGVLAVGVGDTVASIF. The Cytoplasmic segment spans residues 458–472; that stretch reads GSTMGEIRWPGTKKT. Positions 459–474 are CTP-binding; that stretch reads STMGEIRWPGTKKTFE. The helical transmembrane segment at 473 to 493 threads the bilayer; sequence FEGTMTSIFAQIISVALILIF. The Lumenal portion of the chain corresponds to 494 to 495; that stretch reads DS. Residues 496–516 traverse the membrane as a helical segment; that stretch reads GVDLNYSYAWILGSISTVSLL. The Cytoplasmic portion of the chain corresponds to 517 to 538; it reads EAYTTQIDNLLLPLYLLILLMA.

It belongs to the polyprenol kinase family.

It is found in the endoplasmic reticulum membrane. It catalyses the reaction a di-trans,poly-cis-dolichol + CTP = a di-trans,poly-cis-dolichyl phosphate + CDP + H(+). It participates in protein modification; protein glycosylation. Catalyzes CTP-mediated phosphorylation of dolichol, the terminal step in de novo dolichyl monophosphate (Dol-P) biosynthesis. Dol-P is a lipid carrier essential for the synthesis of N-linked and O-linked oligosaccharides and for GPI anchors. This Bos taurus (Bovine) protein is Dolichol kinase (DOLK).